Here is a 462-residue protein sequence, read N- to C-terminus: uncharacterized protein (462 aa).

A TRAM domain is found at 12-70; it reads MLKKNDIIQVAISDLSHEGAGVAKHDGFVFFVDNALPEEVIDMRVLKVNKNSGFGKVEA. Q294, Y323, E344, and D392 together coordinate S-adenosyl-L-methionine. C419 serves as the catalytic Nucleophile.

Belongs to the class I-like SAM-binding methyltransferase superfamily. RNA M5U methyltransferase family.

This is an uncharacterized protein from Streptococcus pyogenes serotype M3 (strain ATCC BAA-595 / MGAS315).